The following is a 181-amino-acid chain: Prepronociceptin (181 aa).

The first 19 residues, 1-19 (MKILFCDVLLLSLLSSVFS), serve as a signal peptide directing secretion. The propeptide occupies 20–95 (SCPEDCLTCQ…QSKASEMQHL (76 aa)). Residues 103-125 (SVVQARDAEPEADAEPVADEADE) are disordered. 2 repeat units span residues 109-114 (DAEPEA) and 115-120 (DAEPVA). The tract at residues 109-120 (DAEPEADAEPVA) is 2 X 6 AA tandem repeats of D-A-E-P-X-A. Over residues 112–125 (PEADAEPVADEADE) the composition is skewed to acidic residues. A propeptide spanning residues 174 to 181 (TLHQNGNV) is cleaved from the precursor.

The protein belongs to the opioid neuropeptide precursor family. Specific enzymatic cleavages at paired basic residues probably yield other active peptides besides nociceptin. Post-translationally, the N-terminal domain contains 6 conserved cysteines thought to be involved in disulfide bonding and/or processing. As to expression, expressed predominantly in the spinal cord and brain, being more abundant in the hypothalamus and striatum. Also found in small amounts in ovary.

The protein resides in the secreted. Functionally, ligand of the opioid receptor-like receptor OPRL1. It may act as a transmitter in the brain by modulating nociceptive and locomotor behavior. May be involved in neuronal differentiation and development. Blocks nociceptin action in pain transmission by inhibiting nociceptin-induced hyperalgesia and allodynia. Its function is as follows. Has potent analgesic activity. The chain is Prepronociceptin (Pnoc) from Rattus norvegicus (Rat).